Consider the following 446-residue polypeptide: Alkylglycerol monooxygenase (446 aa).

Helical transmembrane passes span 39–59 (VNQA…LGWL) and 103–123 (FHFL…FLGV). In terms of domain architecture, Fatty acid hydroxylase spans 117-248 (WLAFLGVDMG…LIIWDRMFGT (132 aa)). The Histidine box-1 signature appears at 131–135 (HRFAH). The short motif at 144-148 (HQVHH) is the Histidine box-2 element. Residues 167 to 187 (FSSWIFYSPLALLIPPSVFAV) traverse the membrane as a helical segment. A Histidine box-3 motif is present at residues 220 to 224 (HRVHH). Helical transmembrane passes span 329-349 (AWSP…LDVY), 362-382 (LTVI…GFLI), and 410-430 (PLLP…TIYW).

It belongs to the sterol desaturase family. TMEM195 subfamily. The cofactor is Fe cation.

The protein resides in the endoplasmic reticulum membrane. It catalyses the reaction 1-O-(1,2-saturated-alkyl)-sn-glycerol + (6R)-L-erythro-5,6,7,8-tetrahydrobiopterin + O2 = a 1-(1-hydroxyalkyl)-sn-glycerol + (6R)-L-erythro-6,7-dihydrobiopterin + H2O. Its function is as follows. Glyceryl-ether monooxygenase that cleaves the O-alkyl bond of ether lipids. Ether lipids are essential components of brain membranes. This Danio rerio (Zebrafish) protein is Alkylglycerol monooxygenase (agmo).